We begin with the raw amino-acid sequence, 150 residues long: Large ribosomal subunit protein bL9 (150 aa).

Belongs to the bacterial ribosomal protein bL9 family.

Its function is as follows. Binds to the 23S rRNA. This is Large ribosomal subunit protein bL9 from Corynebacterium efficiens (strain DSM 44549 / YS-314 / AJ 12310 / JCM 11189 / NBRC 100395).